The sequence spans 258 residues: Ribosomal RNA small subunit methyltransferase A (258 aa).

S-adenosyl-L-methionine contacts are provided by His-13, Leu-15, Gly-40, Glu-61, Asp-85, and Asn-106.

It belongs to the class I-like SAM-binding methyltransferase superfamily. rRNA adenine N(6)-methyltransferase family. RsmA subfamily.

The protein resides in the cytoplasm. The enzyme catalyses adenosine(1518)/adenosine(1519) in 16S rRNA + 4 S-adenosyl-L-methionine = N(6)-dimethyladenosine(1518)/N(6)-dimethyladenosine(1519) in 16S rRNA + 4 S-adenosyl-L-homocysteine + 4 H(+). In terms of biological role, specifically dimethylates two adjacent adenosines (A1518 and A1519) in the loop of a conserved hairpin near the 3'-end of 16S rRNA in the 30S particle. May play a critical role in biogenesis of 30S subunits. The sequence is that of Ribosomal RNA small subunit methyltransferase A from Porphyromonas gingivalis (strain ATCC 33277 / DSM 20709 / CIP 103683 / JCM 12257 / NCTC 11834 / 2561).